Here is a 68-residue protein sequence, read N- to C-terminus: Large ribosomal subunit protein bL31 (68 aa).

Belongs to the bacterial ribosomal protein bL31 family. Type A subfamily. As to quaternary structure, part of the 50S ribosomal subunit.

In terms of biological role, binds the 23S rRNA. This is Large ribosomal subunit protein bL31 from Helicobacter hepaticus (strain ATCC 51449 / 3B1).